Here is a 529-residue protein sequence, read N- to C-terminus: MSTFPWLTTIILFPIVAALAIPFIPDPTGKGRPIRWYALAVGLIDFALIVYAFTNFYDLNTPGMQLWESYDWIPEIGLRWSVGADGLSMPLILLTGFITTLAILAAWPVTLKPRLFYFLMLAMYGGQIAVFAVQDMLVFFLAWELELIPVYLLLAIWGGHKRQYAATKFILYTAGSSLFILVAGLAMAFYGDTVSFDMQTLAAKDYALGFQLLVYAGFLVAYGVKLPIVPLHTWLPDAHGEATAPVHMLLAGILLKMGGYALIRMNVDMLPAAHAKFAPVLVILGVVNIIYAALTSYAQRNLKRKIAYSSISHIGFVLIGIASFTNLGMSGAVLQMVSHGLIGASLFFLVGATYDRTHTLILEEMGGVGQKMKKIFAMFTACSLASLALPGMSGFVAELMVFIGFATSDAYSLPFRVIVVFLAAVGVILTPIYLLSMLREIFYGPENKELVEHEALVDAEPREVFIIACLLVPIIGIGLYPKLLTQIYDATTGQVIARAREVLPTLAQQTEQPLGILPMVAPQLKANAQ.

13 helical membrane-spanning segments follow: residues 4–24, 36–56, 91–111, 115–135, 137–157, 169–189, 209–229, 243–263, 277–297, 314–334, 335–355, 387–407, and 417–437; these read FPWLTTIILFPIVAALAIPFI, WYALAVGLIDFALIVYAFTNF, LILLTGFITTLAILAAWPVTL, LFYFLMLAMYGGQIAVFAVQD, LVFFLAWELELIPVYLLLAIW, FILYTAGSSLFILVAGLAMAF, GFQLLVYAGFLVAYGVKLPIV, TAPVHMLLAGILLKMGGYALI, FAPVLVILGVVNIIYAALTSY, IGFVLIGIASFTNLGMSGAVL, QMVSHGLIGASLFFLVGATYD, LALPGMSGFVAELMVFIGFAT, and VIVVFLAAVGVILTPIYLLSM.

The protein belongs to the complex I subunit 4 family.

The protein localises to the cellular thylakoid membrane. The enzyme catalyses a plastoquinone + NADH + (n+1) H(+)(in) = a plastoquinol + NAD(+) + n H(+)(out). It catalyses the reaction a plastoquinone + NADPH + (n+1) H(+)(in) = a plastoquinol + NADP(+) + n H(+)(out). NDH-1 shuttles electrons from NAD(P)H, via FMN and iron-sulfur (Fe-S) centers, to quinones in the respiratory chain. The immediate electron acceptor for the enzyme in this species is believed to be plastoquinone. Couples the redox reaction to proton translocation (for every two electrons transferred, four hydrogen ions are translocated across the cytoplasmic membrane), and thus conserves the redox energy in a proton gradient. This chain is NAD(P)H-quinone oxidoreductase chain 4 1, found in Thermosynechococcus vestitus (strain NIES-2133 / IAM M-273 / BP-1).